Here is a 489-residue protein sequence, read N- to C-terminus: Glutamyl-tRNA(Gln) amidotransferase subunit A (489 aa).

Active-site charge relay system residues include lysine 78 and serine 153. The active-site Acyl-ester intermediate is serine 177.

It belongs to the amidase family. GatA subfamily. Heterotrimer of A, B and C subunits.

It carries out the reaction L-glutamyl-tRNA(Gln) + L-glutamine + ATP + H2O = L-glutaminyl-tRNA(Gln) + L-glutamate + ADP + phosphate + H(+). Allows the formation of correctly charged Gln-tRNA(Gln) through the transamidation of misacylated Glu-tRNA(Gln) in organisms which lack glutaminyl-tRNA synthetase. The reaction takes place in the presence of glutamine and ATP through an activated gamma-phospho-Glu-tRNA(Gln). This chain is Glutamyl-tRNA(Gln) amidotransferase subunit A, found in Enterococcus faecalis (strain ATCC 700802 / V583).